The chain runs to 80 residues: Large ribosomal subunit protein bL31 (80 aa).

It belongs to the bacterial ribosomal protein bL31 family. Type A subfamily. Part of the 50S ribosomal subunit.

Functionally, binds the 23S rRNA. In Nostoc punctiforme (strain ATCC 29133 / PCC 73102), this protein is Large ribosomal subunit protein bL31.